A 213-amino-acid polypeptide reads, in one-letter code: uncharacterized protein (213 aa).

The helical transmembrane segment at 22–42 (WFGLSMVSIAVIFGPLTGAHV) threads the bilayer. Residues 43–45 (NPA) carry the NPA 1 motif. 3 helical membrane passes run 63–83 (VYII…WLLF), 112–132 (NLLS…TLNH), and 138–158 (GVAM…FGGL). The short motif at 164–166 (NPA) is the NPA 2 element. Residues 188-208 (FDYAWVPVLRPVIGAILAAWL) traverse the membrane as a helical segment.

The protein belongs to the MIP/aquaporin (TC 1.A.8) family.

The protein resides in the cell membrane. This is an uncharacterized protein from Haemophilus influenzae (strain ATCC 51907 / DSM 11121 / KW20 / Rd).